The primary structure comprises 745 residues: VCP-like ATPase (745 aa).

ATP contacts are provided by residues 231-238 (GPPGTGKT) and 508-515 (GPPGVGKT).

Belongs to the AAA ATPase family. CDC48 subfamily. As to quaternary structure, homohexamer. Forms a ring-shaped particle.

This is VCP-like ATPase (vat) from Thermoplasma acidophilum (strain ATCC 25905 / DSM 1728 / JCM 9062 / NBRC 15155 / AMRC-C165).